Reading from the N-terminus, the 766-residue chain is 5-methyltetrahydropteroyltriglutamate--homocysteine methyltransferase (766 aa).

Residues 16–19 and Lys-119 contribute to the 5-methyltetrahydropteroyltri-L-glutamate site; that span reads RELK. L-homocysteine is bound by residues 440-442 and Glu-493; that span reads IGS. L-methionine contacts are provided by residues 440 to 442 and Glu-493; that span reads IGS. Residues 524–525 and Trp-570 each bind 5-methyltetrahydropteroyltri-L-glutamate; that span reads RC. Asp-608 is a binding site for L-homocysteine. An L-methionine-binding site is contributed by Asp-608. Glu-614 serves as a coordination point for 5-methyltetrahydropteroyltri-L-glutamate. Positions 650, 652, and 674 each coordinate Zn(2+). The active-site Proton donor is the His-703. Cys-735 is a binding site for Zn(2+).

Belongs to the vitamin-B12 independent methionine synthase family. Zn(2+) serves as cofactor.

The catalysed reaction is 5-methyltetrahydropteroyltri-L-glutamate + L-homocysteine = tetrahydropteroyltri-L-glutamate + L-methionine. It participates in amino-acid biosynthesis; L-methionine biosynthesis via de novo pathway; L-methionine from L-homocysteine (MetE route): step 1/1. Its function is as follows. Catalyzes the transfer of a methyl group from 5-methyltetrahydrofolate to homocysteine resulting in methionine formation. The sequence is that of 5-methyltetrahydropteroyltriglutamate--homocysteine methyltransferase from Pseudomonas aeruginosa (strain LESB58).